The following is a 236-amino-acid chain: Alpha-acetolactate decarboxylase (236 aa).

Belongs to the alpha-acetolactate decarboxylase family.

The catalysed reaction is (2S)-2-acetolactate + H(+) = (R)-acetoin + CO2. It functions in the pathway polyol metabolism; (R,R)-butane-2,3-diol biosynthesis; (R,R)-butane-2,3-diol from pyruvate: step 2/3. Functionally, converts acetolactate into acetoin. The sequence is that of Alpha-acetolactate decarboxylase (aldB) from Lactococcus lactis subsp. cremoris (strain MG1363).